A 320-amino-acid chain; its full sequence is Protein LATERAL ROOT PRIMORDIUM 1 (320 aa).

The interval 90-110 (QTTVGTSSNNSGSGSGASGTA) is disordered. Zn(2+) is bound by residues cysteine 112, cysteine 115, cysteine 123, cysteine 128, cysteine 132, and cysteine 139. Positions 112-139 (CQDCGNQAKKECKQRRCRTCCKSRGFDC) form a DNA-binding region, zn(2)-C6 fungal-type; degenerate. The disordered stretch occupies residues 150–223 (AARRRERQVM…QDGGGSREAW (74 aa)). Low complexity predominate over residues 168-177 (GSSLSTSSGT). Polar residues predominate over residues 193–214 (ATSHTSTSNTPPQSFETSSSRQ). The short motif at 256 to 259 (IGGH) is the Required for homo- and heterodimerization element.

This sequence belongs to the SHI protein family. As to quaternary structure, homodimer. Restricted to lateral root primordia.

The protein resides in the nucleus. Functionally, transcription activator that binds DNA on 5'-ACTCTAC-3' and promotes auxin homeostasis-regulating gene expression (e.g. YUC genes), as well as genes affecting stamen development, cell expansion and timing of flowering. Synergistically with other SHI-related proteins, regulates gynoecium, stamen and leaf development in a dose-dependent manner, controlling apical-basal patterning. Promotes style and stigma formation, and influence vascular development during gynoecium development. May also have a role in the formation and/or maintenance of the shoot apical meristem (SAM). Modulates root growth. The polypeptide is Protein LATERAL ROOT PRIMORDIUM 1 (LRP1) (Arabidopsis thaliana (Mouse-ear cress)).